The chain runs to 1063 residues: Structural polyprotein (1063 aa).

The disordered stretch occupies residues 23-131 (LRAELAAGAS…LGPPTNPFQA (109 aa)). The interval 30–69 (GASQLRRPRPPRQRDSSTSGDDSGRDSGGPRRRRGNRGRG) is human C1QBP/SF2P32-binding. Ser-46 carries the post-translational modification Phosphoserine; by host. Positions 59 to 69 (PRRRRGNRGRG) are enriched in basic residues. Positions 70–87 (QRKDWSKAPPPPEERQES) are enriched in basic and acidic residues. The segment covering 93–107 (APKPPRAPPQPPQPP) has biased composition (pro residues). Cys-153 and Cys-197 form a disulfide bridge. The interval 279 to 300 (GAPQVFLAGLLLAAVAVGTARA) is functions as E2 signal peptide. Residues 301 to 534 (GLQPRTDIAA…LWLATANALS (234 aa)) are Extracellular-facing. The tract at residues 305–327 (RTDIAAPPAPPQAPRAHGKHYGH) is disordered. Asn-353, Asn-371, Asn-410, and Asn-429 each carry an N-linked (GlcNAc...) asparagine; by host glycan. A helical transmembrane segment spans residues 535 to 555 (LDHALAAVVLLVPWVLIFMLC). The Cytoplasmic segment spans residues 556–582 (RRACRRRGAAAALTAVVLQGYNPPAYG). The tract at residues 563–582 (GAAAALTAVVLQGYNPPAYG) is functions as E1 signal peptide. Topologically, residues 583–1028 (EEAFTYLCTA…QTWAEWAAAH (446 aa)) are extracellular. Cystine bridges form between Cys-590/Cys-595, Cys-619/Cys-824, Cys-641/Cys-653, Cys-699/Cys-712, Cys-758/Cys-767, Cys-807/Cys-817, Cys-931/Cys-934, and Cys-950/Cys-983. The N-linked (GlcNAc...) asparagine; by host glycan is linked to Asn-658. Residues Asn-670 and Ala-671 each coordinate Ca(2+). Ca(2+) contacts are provided by Asp-718 and Thr-719. N-linked (GlcNAc...) asparagine; by host glycans are attached at residues Asn-759 and Asn-791. 2 O-linked (GalNAc...) threonine; by host glycosylation sites follow: Thr-1011 and Thr-1012. Residues 1029-1049 (WWQLTLGAICALLLAGLLACC) traverse the membrane as a helical segment. At 1050–1063 (AKCLYYLRGAIAPR) the chain is on the extracellular side.

In terms of assembly, homodimer; further assembles into homooligomer. Interacts with human C1QBP. Interacts (via N-terminus) with protease/methyltransferase p150. As to quaternary structure, heterodimer with spike glycoprotein E2. Heterodimer with spike glycoprotein E1. Structural polyprotein: Specific enzymatic cleavages in vivo yield mature proteins. Two signal peptidase-mediated cleavages within the polyprotein produce the structural proteins capsid, E2, and E1. The E2 signal peptide remains attached to the C-terminus of the capsid protein after cleavage by the signal peptidase. Another signal peptide at E2 C-terminus directs E1 to the ER, with a similar mechanism. Post-translationally, contains three N-linked oligosaccharides. In terms of processing, capsid is phosphorylated on Ser-46 by host. This phosphorylation negatively regulates capsid protein RNA-binding activity. Dephosphorylated by human PP1A.

It localises to the virion. Its subcellular location is the host cytoplasm. The protein localises to the host mitochondrion. The protein resides in the virion membrane. It is found in the host Golgi apparatus membrane. Its function is as follows. Capsid protein interacts with genomic RNA and assembles into icosahedric core particles 65-70 nm in diameter. The resulting nucleocapsid eventually associates with the cytoplasmic domain of E2 at the cell membrane, leading to budding and formation of mature virions from host Golgi membranes. Phosphorylation negatively regulates RNA-binding activity, possibly delaying virion assembly during the viral replication phase. Capsid protein dimerizes and becomes disulfide-linked in the virion. Modulates genomic RNA replication. Modulates subgenomic RNA synthesis by interacting with human C1QBP/SF2P32. Induces both perinuclear clustering of mitochondria and the formation of electron-dense intermitochondrial plaques, both hallmarks of rubella virus infected cells. Induces apoptosis when expressed in transfected cells. Functionally, responsible for viral attachment to target host cell, by binding to the cell receptor. Its transport to the plasma membrane depends on interaction with E1 protein. The surface glycoproteins display an irregular helical organization and a pseudo-tetrameric inner nucleocapsid arrangement. In terms of biological role, class II viral fusion protein. Fusion activity is inactive as long as E1 is bound to E2 in mature virion. After virus attachment to target cell and clathrin-mediated endocytosis, acidification of the endosome would induce dissociation of E1/E2 heterodimer and concomitant trimerization of the E1 subunits. This E1 homotrimer is fusion active, and promotes release of viral nucleocapsid in cytoplasm after endosome and viral membrane fusion. The cytoplasmic tail of spike glycoprotein E1 modulates virus release. The surface glycoproteins display an irregular helical organization and a pseudo-tetrameric inner nucleocapsid arrangement. The protein is Structural polyprotein of Rubella virus (strain BRD1) (RUBV).